We begin with the raw amino-acid sequence, 1462 residues long: FYVE, RhoGEF and PH domain-containing protein 5 (1462 aa).

6 disordered regions span residues 37–323 (GRLP…SAEE), 492–512 (YVPE…APGI), 592–613 (SGSF…SSMV), 670–718 (HVDV…ASES), 746–777 (EDRS…YENI), and 851–887 (CPIS…THKV). Residues 72–82 (PLREDEPKDEG) show a composition bias toward basic and acidic residues. 2 stretches are compositionally biased toward acidic residues: residues 95–106 (SAEEEEEREEGG) and 137–151 (EGTD…EGCA). A compositionally biased stretch (basic and acidic residues) spans 161-177 (SRSEEEEKLVQPHRECS). 2 stretches are compositionally biased toward acidic residues: residues 211-220 (GEAEEDDEEG) and 242-255 (MGQD…EPPE). Polar residues predominate over residues 592-611 (SGSFSQRNHLPSSGTSTPSS). Residues 676–685 (SSSRSSSESS) are compositionally biased toward low complexity. Positions 858-887 (PKEDLTSDEEQRSSEEEDSASRDPSVTHKV) are enriched in basic and acidic residues. In terms of domain architecture, DH spans 892–1084 (RALVIAQELL…SKVTDRANDS (193 aa)). The 95-residue stretch at 1113 to 1207 (EFLKEGTLMK…WYGCLSRALP (95 aa)) folds into the PH 1 domain. The segment at 1242–1301 (VTHVMMCMNCGCDFSLTLRRHHCHACGKIVCRNCSRNKYPLKYLKDRMAKVCDGCFGELK) adopts an FYVE-type zinc-finger fold. Zn(2+) is bound by residues Cys-1248, Cys-1251, Cys-1264, Cys-1267, Cys-1272, Cys-1275, Cys-1293, and Cys-1296. Residues 1363 to 1461 (GSAISGYLSR…WIEAMEDASV (99 aa)) form the PH 2 domain.

As to expression, expressed in endothelial cells (at protein level).

The protein resides in the cytoplasm. The protein localises to the cytoskeleton. It localises to the cell projection. Its subcellular location is the ruffle membrane. It is found in the endoplasmic reticulum. The protein resides in the golgi apparatus. The protein localises to the early endosome. Its function is as follows. Activates CDC42, a member of the Ras-like family of Rho- and Rac proteins, by exchanging bound GDP for free GTP. Mediates VEGF-induced CDC42 activation. May regulate proangiogenic action of VEGF in vascular endothelial cells, including network formation, directional movement and proliferation. May play a role in regulating the actin cytoskeleton and cell shape. The polypeptide is FYVE, RhoGEF and PH domain-containing protein 5 (FGD5) (Homo sapiens (Human)).